The chain runs to 333 residues: Electron transfer flavoprotein subunit alpha, mitochondrial (333 aa).

Residues 1-19 (MFRAAAPGQLRRAASLLRF) constitute a mitochondrion transit peptide. The interval 20–204 (QSTLVIAEHA…EISEWLDQKL (185 aa)) is domain I. K59 carries the N6-acetyllysine; alternate modification. K59 carries the N6-succinyllysine; alternate modification. The residue at position 62 (K62) is an N6-acetyllysine. Residue K69 is modified to N6-acetyllysine; alternate. Position 69 is an N6-succinyllysine; alternate (K69). At K75 the chain carries N6-acetyllysine. A Phosphothreonine modification is found at T93. Residues K101 and K139 each carry the N6-acetyllysine modification. Residue S140 is modified to Phosphoserine. At K158 the chain carries N6-acetyllysine; alternate. K158 carries the post-translational modification N6-succinyllysine; alternate. Position 164 is an N6-acetyllysine (K164). Residue K187 is modified to N6-succinyllysine. N6-acetyllysine; alternate is present on K203. At K203 the chain carries N6-succinyllysine; alternate. Residues 205-333 (TKSDRPELTG…PEMTEILKKK (129 aa)) form a domain II region. K216 bears the N6-succinyllysine mark. An FAD-binding site is contributed by R223. 2 positions are modified to N6-acetyllysine; alternate: K226 and K232. K226 and K232 each carry N6-succinyllysine; alternate. FAD is bound by residues S248, 263 to 266 (VGQT), 281 to 286 (SGAIQH), and N300. N6-succinyllysine is present on K301. 318 to 319 (DL) lines the FAD pocket.

Belongs to the ETF alpha-subunit/FixB family. In terms of assembly, heterodimer composed of ETFA and ETFB. Identified in a complex that contains ETFA, ETFB and ETFRF1. Interaction with ETFRF1 promotes dissociation of the bound FAD and loss of electron transfer activity. Interacts with TASOR. Requires FAD as cofactor.

The protein localises to the mitochondrion matrix. In terms of biological role, heterodimeric electron transfer flavoprotein that accepts electrons from several mitochondrial dehydrogenases, including acyl-CoA dehydrogenases, glutaryl-CoA and sarcosine dehydrogenase. It transfers the electrons to the main mitochondrial respiratory chain via ETF-ubiquinone oxidoreductase (ETF dehydrogenase). Required for normal mitochondrial fatty acid oxidation and normal amino acid metabolism. The polypeptide is Electron transfer flavoprotein subunit alpha, mitochondrial (ETFA) (Pongo abelii (Sumatran orangutan)).